Consider the following 134-residue polypeptide: MKITRHQERVWALQILYSLDISSELNIQKARKTCREFKYKKVLDKKRYYFEDIVEGVINSRQDLDSIINKYAIDWDVERMACIDRNILRIALYEIESGLPVGVAIDEAVEIAKDFGDSNSPKFINGILAKSIED.

Belongs to the NusB family.

Functionally, involved in transcription antitermination. Required for transcription of ribosomal RNA (rRNA) genes. Binds specifically to the boxA antiterminator sequence of the ribosomal RNA (rrn) operons. The polypeptide is Transcription antitermination protein NusB (Halothermothrix orenii (strain H 168 / OCM 544 / DSM 9562)).